Reading from the N-terminus, the 357-residue chain is NADPH HC-toxin reductase 1 (357 aa).

Residues R40, K47, 68 to 69, 88 to 90, Y178, K182, 207 to 210, and T222 contribute to the NADP(+) site; these read DL, VAT, and LGLV. K182 serves as the catalytic Proton donor.

This sequence belongs to the NAD(P)-dependent epimerase/dehydratase family.

With respect to regulation, activity is sensitive to heat, dependent on NADPH, and inhibited by p-hydroxymercuribenzoate and disulfiram. In tandem with Hm2, NADPH-dependent Helminthosporium carbonum (HC) toxin reductase (HCTR), which inactivates HC toxin, a cyclic tetrapeptide produced by the fungus Cochliobolus carbonum to permit infection and acting as an inhibitor of host histone deacetylases (HDACs), thus conferring resistance against C.carbonum race 1 in resistant cultivars (e.g. cv. B73 and cv. Wisconsin 22). Catalyzes the production of 8-hydroxy derivative of HC-toxin via the reduction of the 8-keto group of 2-amino-9,10-epoxy-8-oxo-decanoic acid, an amino acid of the HC-toxin. The sequence is that of NADPH HC-toxin reductase 1 from Zea mays (Maize).